We begin with the raw amino-acid sequence, 317 residues long: Melanocyte-stimulating hormone receptor (317 aa).

Residues 1 to 37 (MPVLGSQRRLLGSLNCTPPATFPLTLAPNRTGPQCLE) are Extracellular-facing. Residue Asn29 is glycosylated (N-linked (GlcNAc...) asparagine). Residues 38-63 (VSIPDGLFLSLGLVSLVENVLVVAAI) form a helical membrane-spanning segment. Residues 64 to 72 (AKNRNLHSP) are Cytoplasmic-facing. The chain crosses the membrane as a helical span at residues 73 to 93 (MYYFICCLAVSDLLVSVSNVL). The Extracellular segment spans residues 94 to 118 (ETAVMLLLEAGALAARAAVVQQLDN). Residues 119 to 140 (VIDMLICGSMVSSLCFLGAIAV) form a helical membrane-spanning segment. At 141–163 (DRYISIFYALRYHSVVTLPRAWR) the chain is on the cytoplasmic side. Residues 164–183 (IIAAIWVASILTSLLFITYY) traverse the membrane as a helical segment. The Extracellular segment spans residues 184 to 191 (NHTVVLLC). Residues 192 to 211 (LVGFFIAMLALMAVLYVHML) form a helical membrane-spanning segment. Residues 212–240 (ARACQHARGIARLQKRQRPIHQGFGLKGA) lie on the Cytoplasmic side of the membrane. The chain crosses the membrane as a helical span at residues 241-266 (ATLTILLGVFFLCWGPFFLHLSLIVL). Topologically, residues 267–279 (CPQHPTCGCIFKN) are extracellular. Residues 280–300 (FNLFLALIICNAIVDPLIYAF) traverse the membrane as a helical segment. Over 301 to 317 (RSQELRKTLQEVLQCSW) the chain is Cytoplasmic. Cys315 carries S-palmitoyl cysteine lipidation.

The protein belongs to the G-protein coupled receptor 1 family. Interacts with MGRN1, but does not undergo MGRN1-mediated ubiquitination; this interaction competes with GNAS-binding and thus inhibits agonist-induced cAMP production. Interacts with OPN3; the interaction results in a decrease in MC1R-mediated cAMP signaling and ultimately a decrease in melanin production in melanocytes.

The protein resides in the cell membrane. In terms of biological role, receptor for MSH (alpha, beta and gamma) and ACTH. The activity of this receptor is mediated by G proteins which activate adenylate cyclase. Mediates melanogenesis, the production of eumelanin (black/brown) and phaeomelanin (red/yellow), via regulation of cAMP signaling in melanocytes. This is Melanocyte-stimulating hormone receptor (MC1R) from Capreolus capreolus (European roe deer).